Here is a 70-residue protein sequence, read N- to C-terminus: DNA-directed RNA polymerase subunit omega (70 aa).

Belongs to the RNA polymerase subunit omega family. In terms of assembly, the RNAP catalytic core consists of 2 alpha, 1 beta, 1 beta' and 1 omega subunit. When a sigma factor is associated with the core the holoenzyme is formed, which can initiate transcription.

The catalysed reaction is RNA(n) + a ribonucleoside 5'-triphosphate = RNA(n+1) + diphosphate. Its function is as follows. Promotes RNA polymerase assembly. Latches the N- and C-terminal regions of the beta' subunit thereby facilitating its interaction with the beta and alpha subunits. In Nitratiruptor sp. (strain SB155-2), this protein is DNA-directed RNA polymerase subunit omega.